A 1481-amino-acid chain; its full sequence is Cystic fibrosis transmembrane conductance regulator (1481 aa).

The Cytoplasmic segment spans residues Met1–Phe77. A helical transmembrane segment spans residues Phe78–Gln98. Residues Phe81–Leu365 form the ABC transmembrane type-1 1 domain. Over Pro99–Tyr122 the chain is Extracellular. The chain crosses the membrane as a helical span at residues Leu123–His146. Topologically, residues His147–Leu195 are cytoplasmic. The chain crosses the membrane as a helical span at residues Ala196–Trp216. The Extracellular segment spans residues Glu217–Phe222. The helical transmembrane segment at Thr223–Met243 threads the bilayer. Residues Met244–Lys298 lie on the Cytoplasmic side of the membrane. The chain crosses the membrane as a helical span at residues Ala299 to Phe319. The Extracellular segment spans residues Leu320–Thr339. A helical membrane pass occupies residues Ile340–Val358. The Cytoplasmic portion of the chain corresponds to Gln359–Ser858. Residues Trp401, Gly457–Thr464, and Gln492 each bind ATP. The region spanning Asn423–Gly645 is the ABC transporter 1 domain. The S-palmitoyl cysteine moiety is linked to residue Cys523. Residues Ser548 and Ser659 each carry the phosphoserine modification. Residues Thr653–Asp831 are disordered R region. Ser669 is modified (phosphoserine; by PKA). Ser685 bears the Phosphoserine mark. Residue Lys687 forms a Glycyl lysine isopeptide (Lys-Gly) (interchain with G-Cter in ubiquitin) linkage. Phosphoserine is present on residues Ser699 and Ser711. Phosphothreonine is present on Thr716. Phosphoserine is present on residues Ser736, Ser767, Ser790, Ser795, and Ser813. The chain crosses the membrane as a helical span at residues Leu859–Val879. The ABC transmembrane type-1 2 domain maps to Leu859 to Ser1155. At Val880–Ile918 the chain is on the extracellular side. Residues Asn894 and Asn900 are each glycosylated (N-linked (GlcNAc...) asparagine). A discontinuously helical transmembrane segment spans residues Tyr919–His939. Residues Thr940–Thr990 are Cytoplasmic-facing. The chain crosses the membrane as a helical span at residues Ile991–Leu1011. The Extracellular portion of the chain corresponds to Gln1012–Pro1013. The helical transmembrane segment at Tyr1014–Leu1034 threads the bilayer. Residues His1035–Thr1095 lie on the Cytoplasmic side of the membrane. Residues Leu1096–Phe1116 traverse the membrane as a helical segment. Topologically, residues Ile1117–Gly1130 are extracellular. Residues Ile1131–Ile1151 traverse the membrane as a helical segment. Residues Asp1152 to Leu1481 are Cytoplasmic-facing. The ABC transporter 2 domain maps to Met1211–Pro1444. ATP-binding positions include Tyr1220 and Gly1245 to Ser1252. Residues Arg1387–Leu1481 are interaction with GORASP2. Residue Cys1396 is the site of S-palmitoyl cysteine attachment. Positions Pro1452–Leu1481 are disordered. Positions Gln1453–Asn1464 are enriched in low complexity. Ser1457 is subject to Phosphoserine. Residues Glu1471–Leu1481 show a composition bias toward acidic residues. Residues Thr1479–Leu1481 carry the PDZ-binding motif.

Belongs to the ABC transporter superfamily. ABCC family. CFTR transporter (TC 3.A.1.202) subfamily. In terms of assembly, monomer; does not require oligomerization for channel activity. May form oligomers in the membrane. Interacts with SLC26A3, SLC26A6 and NHERF1. Interacts with SHANK2. Interacts with MYO6. Interacts (via C-terminus) with GOPC (via PDZ domain); this promotes CFTR internalization and thereby decreases channel activity. Interacts with SLC4A7 through NHERF1. Found in a complex with MYO5B and RAB11A. Interacts with ANO1. Interacts with SLC26A8. Interacts with AHCYL1; the interaction increases CFTR activity. Interacts with CSE1L. The core-glycosylated form interacts with GORASP2 (via PDZ GRASP-type 1 domain) in respone to ER stress. Interacts with MARCHF2; the interaction leads to CFTR ubiqtuitination and degradation. Interacts with ADGRG2. N-glycosylated. Post-translationally, phosphorylated; cAMP treatment promotes phosphorylation and activates the channel. Dephosphorylation decreases the ATPase activity (in vitro). Phosphorylation at PKA sites activates the channel. Phosphorylation at PKC sites enhances the response to phosphorylation by PKA. Phosphorylated by AMPK; this inhibits channel activity. In terms of processing, ubiquitinated, leading to its degradation in the lysosome. Deubiquitination by USP10 in early endosomes enhances its endocytic recycling to the cell membrane. Ubiquitinated by RNF185 during ER stress. Ubiquitinated by MARCHF2.

It is found in the apical cell membrane. The protein localises to the early endosome membrane. It localises to the cell membrane. The protein resides in the recycling endosome membrane. Its subcellular location is the endoplasmic reticulum membrane. It is found in the nucleus. The catalysed reaction is ATP + H2O + closed Cl(-) channel = ADP + phosphate + open Cl(-) channel.. It catalyses the reaction chloride(in) = chloride(out). It carries out the reaction hydrogencarbonate(in) = hydrogencarbonate(out). The enzyme catalyses ATP + H2O = ADP + phosphate + H(+). Functionally, epithelial ion channel that plays an important role in the regulation of epithelial ion and water transport and fluid homeostasis. Mediates the transport of chloride ions across the cell membrane. Possesses an intrinsic ATPase activity and utilizes ATP to gate its channel; the passive flow of anions through the channel is gated by cycles of ATP binding and hydrolysis by the ATP-binding domains. The ion channel is also permeable to HCO(3)(-); selectivity depends on the extracellular chloride concentration. Exerts its function also by modulating the activity of other ion channels and transporters. Contributes to the regulation of the pH and the ion content of the epithelial fluid layer. Modulates the activity of the epithelial sodium channel (ENaC) complex, in part by regulating the cell surface expression of the ENaC complex. May regulate bicarbonate secretion and salvage in epithelial cells by regulating the transporter SLC4A7. Can inhibit the chloride channel activity of ANO1. Plays a role in the chloride and bicarbonate homeostasis during sperm epididymal maturation and capacitation. This chain is Cystic fibrosis transmembrane conductance regulator, found in Muntiacus muntjak (Barking deer).